The chain runs to 395 residues: D-alanine--D-alanine ligase (395 aa).

One can recognise an ATP-grasp domain in the interval 172–391 (KVVLDAAGIP…YTELITRLIE (220 aa)). 204-266 (DAGLTYPLFV…EQGIDGREIE (63 aa)) is an ATP binding site. Residues D345, E358, and N360 each coordinate Mg(2+).

This sequence belongs to the D-alanine--D-alanine ligase family. The cofactor is Mg(2+). Mn(2+) is required as a cofactor.

Its subcellular location is the cytoplasm. The enzyme catalyses 2 D-alanine + ATP = D-alanyl-D-alanine + ADP + phosphate + H(+). Its pathway is cell wall biogenesis; peptidoglycan biosynthesis. Its function is as follows. Cell wall formation. This chain is D-alanine--D-alanine ligase, found in Bifidobacterium longum (strain DJO10A).